The primary structure comprises 87 residues: Serine protease inhibitor Kazal-type 12 (87 aa).

A signal peptide spans 1-22 (MKPAGAFLLLISLACLFLSVDA). The region spanning 26 to 87 (GGFQAFCSNY…KLGFKHEGKC (62 aa)) is the Kazal-like domain. Disulfide bonds link Cys-32–Cys-68, Cys-46–Cys-65, and Cys-54–Cys-87.

In terms of tissue distribution, expressed in epydiymis, in the caput.

The protein resides in the secreted. Its function is as follows. Inhibits trypsin. The polypeptide is Serine protease inhibitor Kazal-type 12 (Spink12) (Mus musculus (Mouse)).